The sequence spans 212 residues: RNA chaperone ProQ (212 aa).

2 stretches are compositionally biased toward basic and acidic residues: residues 102–124 and 132–144; these read ALKESKERVFASRRTNTKEEKAK and RKADAAAKSDKPK. Residues 102–149 are disordered; it reads ALKESKERVFASRRTNTKEEKAKQPRRPAPRKADAAAKSDKPKAAPKA.

This sequence belongs to the ProQ family.

Its subcellular location is the cytoplasm. In terms of biological role, RNA chaperone with significant RNA binding, RNA strand exchange and RNA duplexing activities. The polypeptide is RNA chaperone ProQ (Aeromonas hydrophila subsp. hydrophila (strain ATCC 7966 / DSM 30187 / BCRC 13018 / CCUG 14551 / JCM 1027 / KCTC 2358 / NCIMB 9240 / NCTC 8049)).